A 338-amino-acid polypeptide reads, in one-letter code: UDP-3-O-acylglucosamine N-acyltransferase (338 aa).

The active-site Proton acceptor is the His239.

Belongs to the transferase hexapeptide repeat family. LpxD subfamily. In terms of assembly, homotrimer.

The enzyme catalyses a UDP-3-O-[(3R)-3-hydroxyacyl]-alpha-D-glucosamine + a (3R)-hydroxyacyl-[ACP] = a UDP-2-N,3-O-bis[(3R)-3-hydroxyacyl]-alpha-D-glucosamine + holo-[ACP] + H(+). It participates in bacterial outer membrane biogenesis; LPS lipid A biosynthesis. Catalyzes the N-acylation of UDP-3-O-acylglucosamine using 3-hydroxyacyl-ACP as the acyl donor. Is involved in the biosynthesis of lipid A, a phosphorylated glycolipid that anchors the lipopolysaccharide to the outer membrane of the cell. This chain is UDP-3-O-acylglucosamine N-acyltransferase, found in Xylella fastidiosa (strain M12).